The following is a 393-amino-acid chain: Staphopain B (393 aa).

The N-terminal stretch at 1 to 36 (MNSSCKSRVFNIISIIMVSMLILSLGAFANNNKAKA) is a signal peptide. A propeptide spanning residues 37–219 (DSHSKQLEIN…KVEENEAIQE (183 aa)) is cleaved from the precursor. Active-site residues include Cys-243, His-340, and Asn-360.

It belongs to the peptidase C47 family. In terms of assembly, in the cytoplasm, prematurely activated/folded SspB forms a stable non-covalent complex with SspC. Post-translationally, proteolytically cleaved by staphylococcal serine protease (SspA).

The protein localises to the secreted. With respect to regulation, prematurely activated/folded staphopain B is inhibited by staphostatin B (SspC), which is probably required to protect staphylococcal cytoplasmic proteins from degradation by SspB. Also inactivated by E-64 and stimulated by EDTA. Cysteine protease that plays an important role in the inhibition of host innate immune response. Degrades host elastin, fibrogen, fibronectin and kininogen. Blocks phagocytosis of opsonised S.aureus by neutrophils and monocytes by inducing their death in a proteolytic activity-dependent manner. Decreases surface expression of the 'don't eat me' signal CD31 on neutrophils. Cleaves host galectin-3/LGALS3, thereby inhibiting the neutrophil-activating ability of the lectin. The chain is Staphopain B (sspB) from Staphylococcus aureus (strain NCTC 8325 / PS 47).